We begin with the raw amino-acid sequence, 385 residues long: 1-deoxy-D-xylulose 5-phosphate reductoisomerase (385 aa).

The NADPH site is built by T10, G11, S12, I13, K37, and N124. 1-deoxy-D-xylulose 5-phosphate is bound at residue K125. E126 serves as a coordination point for NADPH. Mn(2+) is bound at residue D150. Residues S151, E152, S176, and H199 each contribute to the 1-deoxy-D-xylulose 5-phosphate site. Position 152 (E152) interacts with Mn(2+). G205 lines the NADPH pocket. 1-deoxy-D-xylulose 5-phosphate contacts are provided by S212, N217, K218, and E221. E221 contributes to the Mn(2+) binding site.

This sequence belongs to the DXR family. The cofactor is Mg(2+). Requires Mn(2+) as cofactor.

The enzyme catalyses 2-C-methyl-D-erythritol 4-phosphate + NADP(+) = 1-deoxy-D-xylulose 5-phosphate + NADPH + H(+). It participates in isoprenoid biosynthesis; isopentenyl diphosphate biosynthesis via DXP pathway; isopentenyl diphosphate from 1-deoxy-D-xylulose 5-phosphate: step 1/6. Catalyzes the NADPH-dependent rearrangement and reduction of 1-deoxy-D-xylulose-5-phosphate (DXP) to 2-C-methyl-D-erythritol 4-phosphate (MEP). In Clostridium botulinum (strain ATCC 19397 / Type A), this protein is 1-deoxy-D-xylulose 5-phosphate reductoisomerase.